Reading from the N-terminus, the 111-residue chain is Disintegrin DS-AS (111 aa).

An N-terminal signal peptide occupies residues methionine 1 to cysteine 20. Residues isoleucine 21–methionine 47 constitute a propeptide that is removed on maturation. In terms of domain architecture, Disintegrin spans methionine 47–aspartate 111. Cystine bridges form between cysteine 53-cysteine 76, cysteine 67-cysteine 73, cysteine 72-cysteine 97, and cysteine 85-cysteine 104. A Cell attachment site motif is present at residues arginine 89–aspartate 91.

In terms of assembly, heterodimer; disulfide-linked.

The protein localises to the secreted. In terms of biological role, inhibits ADP-induced platelet aggregation in human platelet-rich plasma (IC(50) is 8 uM). This chain is Disintegrin DS-AS, found in Atheris squamigera (Variable bush viper).